The chain runs to 450 residues: MSRKYFGTDGVRGKVGEFPITPDFAMKLGWAAGTVLASTGTKEVLIGKDTRSSGYMLESAMEAGFSAAGVNVALIGPMPTPAVAYLASTFRADAGVVISASHNPFYDNGIKFFSNSGTKLNDAQELEIEALLEKALNQNAMQCVASEKLGKVRRIDDAAGRYIEFCKGTFPNHLSLAGLKIVIDSAHGAAYHIAPNVYRELGAEVISINDKPNGVNINDHCGATHLDSLQTAVMVHEADLGIALDGDADRVMFVDHNGHVVDGDEILFILAQAAHSKGEMTGGVVGTLMSNLGLELALKQMDIPFVRAKVGDRYVVEQLKRTGWQLGGEGSGHILSLQHASTGDGIVASLQVLKAVLESQKSLSEIKAGMTKLPQVLINVRLATADADSILATTSVKQAVIKAEEFLGDQGRVLLRKSGTEPLIRVMVESTDNIMTQTQAEYIADAVRAA.

Ser101 acts as the Phosphoserine intermediate in catalysis. The Mg(2+) site is built by Ser101, Asp245, Asp247, and Asp249. A Phosphoserine modification is found at Ser101.

The protein belongs to the phosphohexose mutase family. The cofactor is Mg(2+). Activated by phosphorylation.

The enzyme catalyses alpha-D-glucosamine 1-phosphate = D-glucosamine 6-phosphate. Functionally, catalyzes the conversion of glucosamine-6-phosphate to glucosamine-1-phosphate. The protein is Phosphoglucosamine mutase 2 of Shewanella baltica (strain OS185).